A 156-amino-acid polypeptide reads, in one-letter code: 6,7-dimethyl-8-ribityllumazine synthase (156 aa).

5-amino-6-(D-ribitylamino)uracil is bound by residues F22, 56–58 (AFE), and 80–82 (AVI). Residue 85–86 (ST) participates in (2S)-2-hydroxy-3-oxobutyl phosphate binding. H88 (proton donor) is an active-site residue. F113 contributes to the 5-amino-6-(D-ribitylamino)uracil binding site. Position 127 (R127) interacts with (2S)-2-hydroxy-3-oxobutyl phosphate.

Belongs to the DMRL synthase family.

The catalysed reaction is (2S)-2-hydroxy-3-oxobutyl phosphate + 5-amino-6-(D-ribitylamino)uracil = 6,7-dimethyl-8-(1-D-ribityl)lumazine + phosphate + 2 H2O + H(+). It participates in cofactor biosynthesis; riboflavin biosynthesis; riboflavin from 2-hydroxy-3-oxobutyl phosphate and 5-amino-6-(D-ribitylamino)uracil: step 1/2. Its function is as follows. Catalyzes the formation of 6,7-dimethyl-8-ribityllumazine by condensation of 5-amino-6-(D-ribitylamino)uracil with 3,4-dihydroxy-2-butanone 4-phosphate. This is the penultimate step in the biosynthesis of riboflavin. In Caldicellulosiruptor saccharolyticus (strain ATCC 43494 / DSM 8903 / Tp8T 6331), this protein is 6,7-dimethyl-8-ribityllumazine synthase.